The sequence spans 250 residues: tRNA (guanine-N(7)-)-methyltransferase (250 aa).

The segment covering 1–10 has biased composition (basic and acidic residues); the sequence is MTPDDPRDAS. Residues 1–30 are disordered; the sequence is MTPDDPRDASDASLADATADSASRGHGSFF. Residues 11 to 24 are compositionally biased toward low complexity; that stretch reads DASLADATADSASR. The S-adenosyl-L-methionine site is built by glutamate 79, glutamate 104, aspartate 131, and aspartate 153. Residue aspartate 153 is part of the active site. 2 residues coordinate substrate: lysine 157 and aspartate 189.

This sequence belongs to the class I-like SAM-binding methyltransferase superfamily. TrmB family.

It catalyses the reaction guanosine(46) in tRNA + S-adenosyl-L-methionine = N(7)-methylguanosine(46) in tRNA + S-adenosyl-L-homocysteine. The protein operates within tRNA modification; N(7)-methylguanine-tRNA biosynthesis. Functionally, catalyzes the formation of N(7)-methylguanine at position 46 (m7G46) in tRNA. The protein is tRNA (guanine-N(7)-)-methyltransferase of Rhodopseudomonas palustris (strain BisA53).